A 3672-amino-acid chain; its full sequence is Laminin-like protein epi-1 (3672 aa).

The first 27 residues, 1-27 (MSPYDSSPWATKALFLIVTLLAQFTYS), serve as a signal peptide directing secretion. The 270-residue stretch at 28–297 (QVLTPSQITI…AIKEIMIGGR (270 aa)) folds into the Laminin N-terminal domain. N-linked (GlcNAc...) asparagine glycans are attached at residues Asn-121, Asn-140, and Asn-249. 43 cysteine pairs are disulfide-bonded: Cys-298/Cys-307, Cys-300/Cys-320, Cys-322/Cys-331, Cys-334/Cys-354, Cys-357/Cys-366, Cys-359/Cys-391, Cys-394/Cys-403, Cys-406/Cys-424, Cys-427/Cys-438, Cys-429/Cys-445, Cys-447/Cys-456, Cys-459/Cys-469, Cys-472/Cys-484, Cys-474/Cys-491, Cys-493/Cys-502, Cys-505/Cys-516, Cys-519/Cys-531, Cys-521/Cys-538, Cys-540/Cys-549, Cys-552/Cys-561, Cys-564/Cys-576, Cys-566/Cys-583, Cys-585/Cys-594, Cys-597/Cys-607, Cys-610/Cys-622, Cys-612/Cys-629, Cys-631/Cys-640, Cys-643/Cys-653, Cys-656/Cys-668, Cys-658/Cys-674, Cys-676/Cys-685, Cys-688/Cys-698, Cys-701/Cys-715, Cys-703/Cys-724, Cys-726/Cys-735, Cys-738/Cys-753, Cys-756/Cys-770, Cys-758/Cys-777, Cys-779/Cys-788, Cys-791/Cys-806, Cys-809/Cys-821, Cys-811/Cys-828, and Cys-830/Cys-839. Laminin EGF-like domains lie at 298-356 (CVCN…TCEA), 357-426 (CNCF…PCKV), 427-471 (CDCD…KCKP), 472-518 (CECN…GCVE), 519-563 (CVCD…DCKF), 564-609 (CNCD…NCKA), 610-655 (CACD…DCRG), 656-700 (CECL…ICEE), 701-755 (CNCN…GCRS), and 756-808 (CDCN…GCES). A glycan (N-linked (GlcNAc...) asparagine) is linked at Asn-351. Asn-477 carries N-linked (GlcNAc...) asparagine glycosylation. N-linked (GlcNAc...) asparagine glycosylation is found at Asn-511 and Asn-530. Residue Asn-634 is glycosylated (N-linked (GlcNAc...) asparagine). The N-linked (GlcNAc...) asparagine glycan is linked to Asn-761. Positions 809–839 (CHCDIGGALRAECDITSGQCKCRPRVTGLRC) constitute a Laminin EGF-like 11; truncated domain. Residues Asn-1014 and Asn-1341 are each glycosylated (N-linked (GlcNAc...) asparagine). 16 disulfide bridges follow: Cys-1415–Cys-1427, Cys-1417–Cys-1434, Cys-1436–Cys-1445, Cys-1448–Cys-1458, Cys-1461–Cys-1469, Cys-1463–Cys-1476, Cys-1478–Cys-1487, Cys-1490–Cys-1503, Cys-1506–Cys-1520, Cys-1508–Cys-1527, Cys-1529–Cys-1538, Cys-1541–Cys-1551, Cys-1554–Cys-1566, Cys-1556–Cys-1573, Cys-1575–Cys-1584, and Cys-1587–Cys-1602. 4 Laminin EGF-like domains span residues 1415 to 1460 (CDCV…ECIK), 1461 to 1505 (CQCN…GCQK), 1506 to 1553 (CGCH…HCYG), and 1554 to 1604 (CSCN…GCVN). Residues 1605–1614 (CFCFGVTDSC) form the Laminin EGF-like 16; first part domain. In terms of domain architecture, Laminin IV type A spans 1615-1796 (RSSMYPVTIM…SVIKASSVEQ (182 aa)). N-linked (GlcNAc...) asparagine glycans are attached at residues Asn-1705 and Asn-1756. Residues 1797 to 1829 (CQCPAPYTGPSCQLCASGYHRVQSGSFLGACVP) enclose the Laminin EGF-like 16; second part domain. 24 disulfides stabilise this stretch: Cys-1830–Cys-1839, Cys-1832–Cys-1846, Cys-1849–Cys-1858, Cys-1861–Cys-1877, Cys-1880–Cys-1894, Cys-1882–Cys-1905, Cys-1907–Cys-1916, Cys-1919–Cys-1934, Cys-1937–Cys-1951, Cys-1939–Cys-1958, Cys-1961–Cys-1970, Cys-1973–Cys-1987, Cys-1990–Cys-2000, Cys-1992–Cys-2007, Cys-2009–Cys-2018, Cys-2021–Cys-2031, Cys-2037–Cys-2048, Cys-2039–Cys-2055, Cys-2057–Cys-2066, Cys-2069–Cys-2081, Cys-2084–Cys-2096, Cys-2086–Cys-2103, Cys-2105–Cys-2114, and Cys-2117–Cys-2129. Laminin EGF-like domains are found at residues 1830–1879 (CECN…DCMA), 1880–1936 (CACP…SCSP), 1937–1989 (CQCN…NCSS), 1990–2036 (CECS…GCQG), 2037–2083 (CHCG…GCDK), and 2084–2131 (CDCE…GCRR). A glycan (N-linked (GlcNAc...) asparagine) is linked at Asn-1868. A glycan (N-linked (GlcNAc...) asparagine) is linked at Asn-1944. Asn-1986 is a glycosylation site (N-linked (GlcNAc...) asparagine). N-linked (GlcNAc...) asparagine glycosylation is present at Asn-2002. N-linked (GlcNAc...) asparagine glycosylation is found at Asn-2159, Asn-2207, Asn-2231, Asn-2235, Asn-2401, Asn-2421, Asn-2487, and Asn-2821. 3 consecutive Laminin G-like domains span residues 2693 to 2884 (GAHF…VNGA), 2896 to 3066 (ELVV…RSGC), and 3072 to 3235 (RTVS…LNGC). A disulfide bridge connects residues Cys-3040 and Cys-3066. The N-linked (GlcNAc...) asparagine glycan is linked to Asn-3087. Cys-3209 and Cys-3235 are oxidised to a cystine. The tract at residues 3236 to 3294 (SLSDDENISTTTTAAPKPTDDSDVAVLPIDEEEESTTTTTTTTTEEPTEEPAEARPDGH) is disordered. N-linked (GlcNAc...) asparagine glycosylation occurs at Asn-3242. Over residues 3271-3280 (TTTTTTTTTE) the composition is skewed to low complexity. Laminin G-like domains lie at 3310–3482 (GFNF…TEQC) and 3488–3669 (PGMY…RNAC). A disulfide bond links Cys-3460 and Cys-3482. An N-linked (GlcNAc...) asparagine glycan is attached at Asn-3541. A disulfide bond links Cys-3633 and Cys-3669.

Laminin is a complex glycoprotein, consisting of three different polypeptide chains (alpha, beta, gamma), which are bound to each other by disulfide bonds into a cross-shaped molecule comprising one long and three short arms with globules at each end.

Its subcellular location is the secreted. The protein localises to the extracellular space. It is found in the extracellular matrix. It localises to the basement membrane. Binding to cells via a high affinity receptor, laminin is thought to mediate the attachment, migration and organization of cells into tissues during embryonic development by interacting with other extracellular matrix components. Required to assemble a stable basement membrane and for organizing receptor complexes and cytoskeletal components to the proper cell surfaces. During embryogenesis, does not require the presence of collagen type IV in order to associate with cell surfaces, prior to assembly of the prototypical basement membrane. During the formation of neuromuscular junctions at the larval stage, negatively regulates membrane protrusion from body wall muscles, probably downstream of the integrin complex formed by pat-2 and pat-3. Probably plays a distinct role from the related laminin subunit alpha lam-3. In Caenorhabditis elegans, this protein is Laminin-like protein epi-1 (epi-1).